The primary structure comprises 2210 residues: Mediator of RNA polymerase II transcription subunit 13-like (2210 aa).

A compositionally biased stretch (polar residues) spans 391–400 (SKRSQMSTPT). Disordered stretches follow at residues 391 to 414 (SKRS…TWDF), 435 to 489 (AVGP…PFHH), and 519 to 582 (VSSS…NPAL). Residues 445-458 (SQPGFSAGPSSSSS) show a composition bias toward low complexity. Residues 468 to 480 (KTAERQEKGDKLQ) show a composition bias toward basic and acidic residues. Residues 533-544 (SRNTSKQMNLNP) are compositionally biased toward polar residues. Over residues 551–560 (PISPLPPTLS) the composition is skewed to pro residues. Phosphoserine is present on residues Ser553 and Ser560. Positions 669-673 (LQRLL) match the LXXLL motif 1 motif. The span at 736–752 (GTEKDSLKKNKSEDGFG) shows a compositional bias: basic and acidic residues. Positions 736 to 770 (GTEKDSLKKNKSEDGFGTKDVTTPGHSTPVPDGKN) are disordered. Residues Ser817, Ser826, and Ser923 each carry the phosphoserine modification. The segment at 1016–1096 (PQMNTPVTLN…STTRPLNSVE (81 aa)) is disordered. Over residues 1025–1036 (NSAAPASNSGAG) the composition is skewed to low complexity. Residues 1077–1092 (TDQGSPASTPSTTRPL) are compositionally biased toward polar residues. The LXXLL motif 2 signature appears at 1225–1229 (LLLLL). Positions 1380–1401 (LPIPTLLVGYDKDFLTISPFSL) are leucine-zipper. Disordered regions lie at residues 1530–1656 (QTPP…VTER) and 2045–2080 (GNLH…QGER). Low complexity predominate over residues 1531–1608 (TPPAAAQGQA…ISTTSSSGFS (78 aa)). Polar residues predominate over residues 1615-1629 (NPSTGGISADRTQGN). Over residues 1637–1650 (DPGQSSSQPSQDGQ) the composition is skewed to low complexity. Phosphoserine is present on Ser2083.

This sequence belongs to the Mediator complex subunit 13 family. In terms of assembly, component of the Mediator complex, which is composed of MED1, MED4, MED6, MED7, MED8, MED9, MED10, MED11, MED12, MED13, MED13L, MED14, MED15, MED16, MED17, MED18, MED19, MED20, MED21, MED22, MED23, MED24, MED25, MED26, MED27, MED29, MED30, MED31, CCNC, CDK8 and CDC2L6/CDK11. The MED12, MED13, CCNC and CDK8 subunits form a distinct module termed the CDK8 module. Mediator containing the CDK8 module is less active than Mediator lacking this module in supporting transcriptional activation. Individual preparations of the Mediator complex lacking one or more distinct subunits have been variously termed ARC, CRSP, DRIP, PC2, SMCC and TRAP. Highly expressed in brain (cerebellum), heart (aorta), skeletal muscle, kidney, placenta and peripheral blood leukocytes. Highly expressed in fetal brain.

The protein resides in the nucleus. Its function is as follows. Component of the Mediator complex, a coactivator involved in the regulated transcription of nearly all RNA polymerase II-dependent genes. Mediator functions as a bridge to convey information from gene-specific regulatory proteins to the basal RNA polymerase II transcription machinery. Mediator is recruited to promoters by direct interactions with regulatory proteins and serves as a scaffold for the assembly of a functional preinitiation complex with RNA polymerase II and the general transcription factors. This subunit may specifically regulate transcription of targets of the Wnt signaling pathway and SHH signaling pathway. This chain is Mediator of RNA polymerase II transcription subunit 13-like (MED13L), found in Homo sapiens (Human).